We begin with the raw amino-acid sequence, 271 residues long: Protein FAM110D (271 aa).

Residues 1–13 (MLLSSPTTPSRGR) are compositionally biased toward polar residues. 3 disordered regions span residues 1 to 84 (MLLS…PDSL), 118 to 149 (DAAP…TGKR), and 186 to 242 (PQSW…GRPT).

The protein belongs to the FAM110 family.

The polypeptide is Protein FAM110D (Mus musculus (Mouse)).